The following is a 248-amino-acid chain: 14-3-3 protein gamma-2 (248 aa).

Belongs to the 14-3-3 family. Homodimer, and heterodimer with other family members. In terms of tissue distribution, expressed in brain, gill, heart, intestine, kidney, liver, ovary, skeletal muscle, spleen and testis.

The protein resides in the cytoplasm. In terms of biological role, adapter protein implicated in the regulation of a large spectrum of both general and specialized signaling pathways. Binds to a large number of partners, usually by recognition of a phosphoserine or phosphothreonine motif. Binding generally results in the modulation of the activity of the binding partner. This is 14-3-3 protein gamma-2 from Oncorhynchus mykiss (Rainbow trout).